A 340-amino-acid chain; its full sequence is MAITVYYDKDCDLNLIQSKKVAIIGFGSQGHAHAMNLRDNGVNVIIGLREGSVSAVKAKNAGFEVMSASEASKMADVIMILAPDEIQADIFNVEIKPNLSEGKAIAFAHGFNIHYGQIVVPKGVDVIMIAPKAPGHTVRNEFTLGGGTPCLIAIHQDESKNAKNLALSYASAIGGGRTGIIETTFKAETETDLFGEQAVLCGGLSALIQAGFETLVEAGYEPEMAYFECLHEMKLIVDLIYQGGIADMRYSISNTAEYGDYITGSKIITEETKKAMKGVLKDIQNGVFAKDFILERRAGFARMHAERKNMNDSLIEKTGRNLRAMMPWISAKKLVDKDKN.

One can recognise a KARI N-terminal Rossmann domain in the interval 1–183; sequence MAITVYYDKD…GGGRTGIIET (183 aa). Residues 26–29, arginine 49, serine 52, serine 54, and 84–87 each bind NADP(+); these read FGSQ and DEIQ. Residue histidine 109 is part of the active site. Glycine 135 serves as a coordination point for NADP(+). Residues 184–329 enclose the KARI C-terminal knotted domain; the sequence is TFKAETETDL…RNLRAMMPWI (146 aa). Residues aspartate 192, glutamate 196, glutamate 228, and glutamate 232 each coordinate Mg(2+). Residue serine 253 participates in substrate binding.

Belongs to the ketol-acid reductoisomerase family. Mg(2+) is required as a cofactor.

The enzyme catalyses (2R)-2,3-dihydroxy-3-methylbutanoate + NADP(+) = (2S)-2-acetolactate + NADPH + H(+). The catalysed reaction is (2R,3R)-2,3-dihydroxy-3-methylpentanoate + NADP(+) = (S)-2-ethyl-2-hydroxy-3-oxobutanoate + NADPH + H(+). The protein operates within amino-acid biosynthesis; L-isoleucine biosynthesis; L-isoleucine from 2-oxobutanoate: step 2/4. It functions in the pathway amino-acid biosynthesis; L-valine biosynthesis; L-valine from pyruvate: step 2/4. Involved in the biosynthesis of branched-chain amino acids (BCAA). Catalyzes an alkyl-migration followed by a ketol-acid reduction of (S)-2-acetolactate (S2AL) to yield (R)-2,3-dihydroxy-isovalerate. In the isomerase reaction, S2AL is rearranged via a Mg-dependent methyl migration to produce 3-hydroxy-3-methyl-2-ketobutyrate (HMKB). In the reductase reaction, this 2-ketoacid undergoes a metal-dependent reduction by NADPH to yield (R)-2,3-dihydroxy-isovalerate. In Campylobacter jejuni subsp. doylei (strain ATCC BAA-1458 / RM4099 / 269.97), this protein is Ketol-acid reductoisomerase (NADP(+)).